Consider the following 387-residue polypeptide: Mannitol-1-phosphate 5-dehydrogenase (387 aa).

3 to 14 (ALHFGAGNIGRG) provides a ligand contact to NAD(+).

The protein belongs to the mannitol dehydrogenase family.

It catalyses the reaction D-mannitol 1-phosphate + NAD(+) = beta-D-fructose 6-phosphate + NADH + H(+). The chain is Mannitol-1-phosphate 5-dehydrogenase from Yersinia pestis bv. Antiqua (strain Antiqua).